Here is a 490-residue protein sequence, read N- to C-terminus: Argininosuccinate lyase (490 aa).

2 disordered regions span residues 426–452 and 469–490; these read DPES…LSAA and ALAT…TAPE. Residues 440 to 452 are compositionally biased toward low complexity; the sequence is PAPESMAAALSAA. A compositionally biased stretch (basic and acidic residues) spans 469–480; the sequence is ALATAADERERV.

This sequence belongs to the lyase 1 family. Argininosuccinate lyase subfamily.

It localises to the cytoplasm. It carries out the reaction 2-(N(omega)-L-arginino)succinate = fumarate + L-arginine. It functions in the pathway amino-acid biosynthesis; L-arginine biosynthesis; L-arginine from L-ornithine and carbamoyl phosphate: step 3/3. The protein is Argininosuccinate lyase of Natronomonas pharaonis (strain ATCC 35678 / DSM 2160 / CIP 103997 / JCM 8858 / NBRC 14720 / NCIMB 2260 / Gabara) (Halobacterium pharaonis).